We begin with the raw amino-acid sequence, 312 residues long: Putative 1-aminocyclopropane-1-carboxylate deaminase (312 aa).

Lysine 42 carries the N6-(pyridoxal phosphate)lysine modification.

The protein belongs to the ACC deaminase/D-cysteine desulfhydrase family. Requires pyridoxal 5'-phosphate as cofactor.

The catalysed reaction is 1-aminocyclopropane-1-carboxylate + H2O = 2-oxobutanoate + NH4(+). The chain is Putative 1-aminocyclopropane-1-carboxylate deaminase from Thermotoga maritima (strain ATCC 43589 / DSM 3109 / JCM 10099 / NBRC 100826 / MSB8).